The sequence spans 448 residues: Na(+)-translocating NADH-quinone reductase subunit A (448 aa).

This sequence belongs to the NqrA family. Composed of six subunits; NqrA, NqrB, NqrC, NqrD, NqrE and NqrF.

The enzyme catalyses a ubiquinone + n Na(+)(in) + NADH + H(+) = a ubiquinol + n Na(+)(out) + NAD(+). NQR complex catalyzes the reduction of ubiquinone-1 to ubiquinol by two successive reactions, coupled with the transport of Na(+) ions from the cytoplasm to the periplasm. NqrA to NqrE are probably involved in the second step, the conversion of ubisemiquinone to ubiquinol. In Alcanivorax borkumensis (strain ATCC 700651 / DSM 11573 / NCIMB 13689 / SK2), this protein is Na(+)-translocating NADH-quinone reductase subunit A.